A 485-amino-acid chain; its full sequence is MEEFQGYLELDRYQQHDFLYPLIFREYIYALAHDHGLNRSILLDNVGYDTKYSLLIIKRLISRMYQQNHLIISANDSNQNKFFGYNKNLYSQMMSEGFAVIVEIPFSRRLVSSLEATEIVKSYNLRSIHSIFPFLEDKFPHLNYVSDVLIPYPIHLEILVQTLRYWVKDPSSLHLLRLFLHEYSNWNSLITPKKIIFSKSNPRLFLLLYNSHVCEYESILLFLRNQSSHLRLTSSGIFFERIHFYEKKKDPVEEVFVNDFPAAILWFFKDPFMHYVRYQGKSILSSKDTPLLMNKWKYYLVNLWQCHSYVWSQPGRIYINQLSKHSLDFLGYFSSMRPNLSVVRGQMLENSFIMDNAMKKLDTLVPIIPLIGSLAKVKFCNALGHPISKSTWADSSDFDIIDRFLHICRNLSHYYSGSSRKKSLYRIKYILRLSCVKTLARKHKSTVRTFLKRLGYKIIGRILYGRRTDSFFNLPKSFLYFEEVL.

Belongs to the intron maturase 2 family. MatK subfamily.

Its subcellular location is the plastid. It localises to the chloroplast. Usually encoded in the trnK tRNA gene intron. Probably assists in splicing its own and other chloroplast group II introns. This chain is Maturase K, found in Malus domestica (Apple).